The sequence spans 3421 residues: Large tegument protein deneddylase (3421 aa).

The interval methionine 1 to tyrosine 248 is deubiquitination activity. The region spanning valine 19 to isoleucine 238 is the Peptidase C76 domain. Residues cysteine 39, aspartate 172, and histidine 174 contribute to the active site. The disordered stretch occupies residues glutamine 311–glutamine 351. The segment covering serine 332 to threonine 344 has biased composition (polar residues). Positions leucine 482 to serine 508 are interaction with inner tegument protein. Disordered stretches follow at residues glutamate 2407–isoleucine 2442 and serine 2479–isoleucine 3195. Positions serine 2415–serine 2432 are enriched in low complexity. Composition is skewed to pro residues over residues threonine 2506–proline 2516, proline 2541–proline 2556, glycine 2565–proline 2577, glycine 2586–proline 2598, and glycine 2607–proline 2619. Polar residues-rich tracts occupy residues glutamine 2620–threonine 2637 and serine 2778–lysine 2787. Low complexity predominate over residues proline 2797–alanine 2857. Residues lysine 2869–alanine 2895 are compositionally biased toward basic and acidic residues. Residues leucine 2953–arginine 2969 are compositionally biased toward polar residues. Composition is skewed to basic and acidic residues over residues arginine 3023 to phenylalanine 3040 and cysteine 3088 to glycine 3097. Residues isoleucine 3120–methionine 3146 are compositionally biased toward polar residues. Residues proline 3171–proline 3188 are compositionally biased toward pro residues.

It belongs to the herpesviridae large tegument protein family. In terms of assembly, interacts with host CUL1 and CUL4A; these interactions inhibit the E3 ligase activity of cullins. Interacts with inner tegument protein. Interacts with capsid vertex specific component CVC2. Interacts with the major capsid protein/MCP.

Its subcellular location is the virion tegument. The protein resides in the host cytoplasm. It is found in the host nucleus. The enzyme catalyses Thiol-dependent hydrolysis of ester, thioester, amide, peptide and isopeptide bonds formed by the C-terminal Gly of ubiquitin (a 76-residue protein attached to proteins as an intracellular targeting signal).. Functionally, large tegument protein that plays multiple roles in the viral cycle. During viral entry, remains associated with the capsid while most of the tegument is detached and participates in the capsid transport toward the host nucleus. Plays a role in the routing of the capsid at the nuclear pore complex and subsequent uncoating. Within the host nucleus, acts as a deneddylase and promotes the degradation of nuclear CRLs (cullin-RING ubiquitin ligases) and thereby stabilizes nuclear CRL substrates, while cytoplasmic CRLs remain unaffected. These modifications prevent host cell cycle S-phase progression and create a favorable environment allowing efficient viral genome replication. Participates later in the secondary envelopment of capsids. Indeed, plays a linker role for the association of the outer viral tegument to the capsids together with the inner tegument protein. The chain is Large tegument protein deneddylase from Equus caballus (Horse).